A 1586-amino-acid chain; its full sequence is Pentafunctional AROM polypeptide (1586 aa).

The tract at residues 1-384 is 3-dehydroquinate synthase; it reads MSEPTKISIL…HEPKASVVSN (384 aa). NAD(+) is bound by residues 44–46, 81–84, 114–116, and D119; these read DTN, ESSK, and GGV. 7-phospho-2-dehydro-3-deoxy-D-arabino-heptonate is bound at residue R130. Residue 139–140 participates in NAD(+) binding; sequence TT. 2 residues coordinate 7-phospho-2-dehydro-3-deoxy-D-arabino-heptonate: D146 and K152. K161 serves as a coordination point for NAD(+). N162 contacts 7-phospho-2-dehydro-3-deoxy-D-arabino-heptonate. NAD(+)-binding positions include 179–182 and N190; that span reads FLET. Residue E194 coordinates Zn(2+). 7-phospho-2-dehydro-3-deoxy-D-arabino-heptonate contacts are provided by residues 194–197 and K250; that span reads EVIK. E260 functions as the Proton acceptor; for 3-dehydroquinate synthase activity in the catalytic mechanism. 7-phospho-2-dehydro-3-deoxy-D-arabino-heptonate contacts are provided by residues 264-268 and H271; that span reads RNLLN. H271 provides a ligand contact to Zn(2+). The active-site Proton acceptor; for 3-dehydroquinate synthase activity is H275. Positions 287 and 356 each coordinate 7-phospho-2-dehydro-3-deoxy-D-arabino-heptonate. Residue H287 coordinates Zn(2+). Residues 397–842 form an EPSP synthase region; that stretch reads VHPGVPKSLN…WDALKQMFSV (446 aa). C824 (for EPSP synthase activity) is an active-site residue. The interval 864 to 1056 is shikimate kinase; sequence SASVFIIGMR…KKKKHSFFVS (193 aa). Position 871–878 (871–878) interacts with ATP; that stretch reads GMRGAGKT. A 3-dehydroquinase region spans residues 1057–1277; it reads LTLPDVEPSG…AAPGQLSAAE (221 aa). H1180 acts as the Proton acceptor; for 3-dehydroquinate dehydratase activity in catalysis. The active-site Schiff-base intermediate with substrate; for 3-dehydroquinate dehydratase activity is the K1208. A shikimate dehydrogenase region spans residues 1290–1586; it reads AQKFAIFGSP…SKHLDYFLSF (297 aa).

It in the N-terminal section; belongs to the sugar phosphate cyclases superfamily. Dehydroquinate synthase family. In the 2nd section; belongs to the EPSP synthase family. The protein in the 3rd section; belongs to the shikimate kinase family. This sequence in the 4th section; belongs to the type-I 3-dehydroquinase family. It in the C-terminal section; belongs to the shikimate dehydrogenase family. Homodimer. Requires Zn(2+) as cofactor.

The protein localises to the cytoplasm. The enzyme catalyses 7-phospho-2-dehydro-3-deoxy-D-arabino-heptonate = 3-dehydroquinate + phosphate. It carries out the reaction 3-dehydroquinate = 3-dehydroshikimate + H2O. It catalyses the reaction shikimate + NADP(+) = 3-dehydroshikimate + NADPH + H(+). The catalysed reaction is shikimate + ATP = 3-phosphoshikimate + ADP + H(+). The enzyme catalyses 3-phosphoshikimate + phosphoenolpyruvate = 5-O-(1-carboxyvinyl)-3-phosphoshikimate + phosphate. The protein operates within metabolic intermediate biosynthesis; chorismate biosynthesis; chorismate from D-erythrose 4-phosphate and phosphoenolpyruvate: step 2/7. It participates in metabolic intermediate biosynthesis; chorismate biosynthesis; chorismate from D-erythrose 4-phosphate and phosphoenolpyruvate: step 3/7. Its pathway is metabolic intermediate biosynthesis; chorismate biosynthesis; chorismate from D-erythrose 4-phosphate and phosphoenolpyruvate: step 4/7. It functions in the pathway metabolic intermediate biosynthesis; chorismate biosynthesis; chorismate from D-erythrose 4-phosphate and phosphoenolpyruvate: step 5/7. The protein operates within metabolic intermediate biosynthesis; chorismate biosynthesis; chorismate from D-erythrose 4-phosphate and phosphoenolpyruvate: step 6/7. In terms of biological role, the AROM polypeptide catalyzes 5 consecutive enzymatic reactions in prechorismate polyaromatic amino acid biosynthesis. This Penicillium rubens (strain ATCC 28089 / DSM 1075 / NRRL 1951 / Wisconsin 54-1255) (Penicillium chrysogenum) protein is Pentafunctional AROM polypeptide.